Here is a 246-residue protein sequence, read N- to C-terminus: 4-hydroxy-tetrahydrodipicolinate reductase (246 aa).

NAD(+) contacts are provided by residues 8 to 13 (GISGRM), 75 to 77 (GTT), and 99 to 102 (ASNY). H132 acts as the Proton donor/acceptor in catalysis. Position 133 (H133) interacts with (S)-2,3,4,5-tetrahydrodipicolinate. Catalysis depends on K136, which acts as the Proton donor. 142 to 143 (GT) lines the (S)-2,3,4,5-tetrahydrodipicolinate pocket.

Belongs to the DapB family.

The protein localises to the cytoplasm. It catalyses the reaction (S)-2,3,4,5-tetrahydrodipicolinate + NAD(+) + H2O = (2S,4S)-4-hydroxy-2,3,4,5-tetrahydrodipicolinate + NADH + H(+). The enzyme catalyses (S)-2,3,4,5-tetrahydrodipicolinate + NADP(+) + H2O = (2S,4S)-4-hydroxy-2,3,4,5-tetrahydrodipicolinate + NADPH + H(+). The protein operates within amino-acid biosynthesis; L-lysine biosynthesis via DAP pathway; (S)-tetrahydrodipicolinate from L-aspartate: step 4/4. Catalyzes the conversion of 4-hydroxy-tetrahydrodipicolinate (HTPA) to tetrahydrodipicolinate. The protein is 4-hydroxy-tetrahydrodipicolinate reductase of Akkermansia muciniphila (strain ATCC BAA-835 / DSM 22959 / JCM 33894 / BCRC 81048 / CCUG 64013 / CIP 107961 / Muc).